The sequence spans 464 residues: Cysteine--tRNA ligase (464 aa).

Cys32 contacts Zn(2+). A 'HIGH' region motif is present at residues 34–44; that stretch reads VTVYDDCHIGH. Positions 213, 238, and 242 each coordinate Zn(2+). Residues 270–274 carry the 'KMSKS' region motif; sequence KMSKS. Residue Lys273 coordinates ATP.

It belongs to the class-I aminoacyl-tRNA synthetase family. In terms of assembly, monomer. The cofactor is Zn(2+).

It is found in the cytoplasm. The enzyme catalyses tRNA(Cys) + L-cysteine + ATP = L-cysteinyl-tRNA(Cys) + AMP + diphosphate. In Francisella tularensis subsp. tularensis (strain SCHU S4 / Schu 4), this protein is Cysteine--tRNA ligase.